Reading from the N-terminus, the 86-residue chain is Large ribosomal subunit protein bL31B (86 aa).

This sequence belongs to the bacterial ribosomal protein bL31 family. Type B subfamily. As to quaternary structure, part of the 50S ribosomal subunit.

In Ralstonia pickettii (strain 12J), this protein is Large ribosomal subunit protein bL31B.